The chain runs to 201 residues: 3-isopropylmalate dehydratase small subunit (201 aa).

The protein belongs to the LeuD family. LeuD type 1 subfamily. Heterodimer of LeuC and LeuD.

It carries out the reaction (2R,3S)-3-isopropylmalate = (2S)-2-isopropylmalate. It participates in amino-acid biosynthesis; L-leucine biosynthesis; L-leucine from 3-methyl-2-oxobutanoate: step 2/4. In terms of biological role, catalyzes the isomerization between 2-isopropylmalate and 3-isopropylmalate, via the formation of 2-isopropylmaleate. This chain is 3-isopropylmalate dehydratase small subunit, found in Azorhizobium caulinodans (strain ATCC 43989 / DSM 5975 / JCM 20966 / LMG 6465 / NBRC 14845 / NCIMB 13405 / ORS 571).